Reading from the N-terminus, the 53-residue chain is Small ribosomal subunit protein uS14 (53 aa).

Zn(2+)-binding residues include Cys17, Cys20, Cys36, and Cys39.

Belongs to the universal ribosomal protein uS14 family. Zinc-binding uS14 subfamily. As to quaternary structure, part of the 30S ribosomal subunit. Zn(2+) serves as cofactor.

In terms of biological role, binds 16S rRNA, required for the assembly of 30S particles. The polypeptide is Small ribosomal subunit protein uS14 (Methanocaldococcus jannaschii (strain ATCC 43067 / DSM 2661 / JAL-1 / JCM 10045 / NBRC 100440) (Methanococcus jannaschii)).